A 252-amino-acid chain; its full sequence is Small ribosomal subunit protein uS2 (252 aa).

It belongs to the universal ribosomal protein uS2 family. In terms of assembly, component of the small ribosomal subunit. Mature ribosomes consist of a small (40S) and a large (60S) subunit. The 40S subunit contains about 33 different proteins and 1 molecule of RNA (18S). The 60S subunit contains about 49 different proteins and 3 molecules of RNA (25S, 5.8S and 5S). Interacts with RPS21.

Its subcellular location is the cytoplasm. Its function is as follows. Required for the assembly and/or stability of the 40S ribosomal subunit. Required for the processing of the 20S rRNA-precursor to mature 18S rRNA in a late step of the maturation of 40S ribosomal subunits. The sequence is that of Small ribosomal subunit protein uS2 from Encephalitozoon cuniculi (strain GB-M1) (Microsporidian parasite).